The chain runs to 465 residues: CCA-adding enzyme (465 aa).

Positions 63 and 66 each coordinate ATP. Residues serine 63 and lysine 66 each coordinate CTP. The Mg(2+) site is built by glutamate 75, aspartate 77, and aspartate 127. Histidine 149, lysine 171, and tyrosine 180 together coordinate ATP. CTP is bound by residues histidine 149, lysine 171, and tyrosine 180.

Belongs to the tRNA nucleotidyltransferase/poly(A) polymerase family. Archaeal CCA-adding enzyme subfamily. In terms of assembly, homodimer. Requires Mg(2+) as cofactor.

The enzyme catalyses a tRNA precursor + 2 CTP + ATP = a tRNA with a 3' CCA end + 3 diphosphate. It catalyses the reaction a tRNA with a 3' CCA end + 2 CTP + ATP = a tRNA with a 3' CCACCA end + 3 diphosphate. Its function is as follows. Catalyzes the addition and repair of the essential 3'-terminal CCA sequence in tRNAs without using a nucleic acid template. Adds these three nucleotides in the order of C, C, and A to the tRNA nucleotide-73, using CTP and ATP as substrates and producing inorganic pyrophosphate. tRNA 3'-terminal CCA addition is required both for tRNA processing and repair. Also involved in tRNA surveillance by mediating tandem CCA addition to generate a CCACCA at the 3' terminus of unstable tRNAs. While stable tRNAs receive only 3'-terminal CCA, unstable tRNAs are marked with CCACCA and rapidly degraded. In Aeropyrum pernix (strain ATCC 700893 / DSM 11879 / JCM 9820 / NBRC 100138 / K1), this protein is CCA-adding enzyme.